We begin with the raw amino-acid sequence, 239 residues long: MGQMADDLGWRLSLLLLSLLLARAGVWGFPRPPGRPPLSLQELQREFKVSLHLARKLLSEVRVQARHFAESHLPGVNLDLLPLGEQLPNVSLNFQAWRGLSDPERLCFLSMTLRPFHTLLGGLGSQGFWTSSERMQLWAIRLDLRDLQQHLRFQVLAAGFNLPGQEEEENEAGRELLPGAPGGPSKPAAQVSWPRLLYTYQLLHSLELVLSRAMRDFLLLSRAGNPAPALGFPTPSSPP.

The signal sequence occupies residues 1–28; the sequence is MGQMADDLGWRLSLLLLSLLLARAGVWG. An N-linked (GlcNAc...) asparagine glycan is attached at asparagine 89. Residues 167-186 form a disordered region; sequence EEENEAGRELLPGAPGGPSK.

It belongs to the IL-6 superfamily. In terms of assembly, heterodimer with EBI3; not disulfide-linked. This heterodimer is known as interleukin IL-27. In terms of processing, O-glycosylated.

The protein resides in the secreted. Associates with EBI3 to form the IL-27 interleukin, a heterodimeric cytokine which functions in innate immunity. Cytokine with pro- and anti-inflammatory properties, that can regulate T-helper cell development, suppress T-cell proliferation, stimulate cytotoxic T-cell activity, induce isotype switching in B-cells, and that has diverse effects on innate immune cells. Among its target cells are CD4 T-helper cells which can differentiate in type 1 effector cells (TH1), type 2 effector cells (TH2) and IL17 producing helper T-cells (TH17). It drives rapid clonal expansion of naive but not memory CD4 T-cells. It also strongly synergizes with IL-12 to trigger interferon-gamma/IFN-gamma production of naive CD4 T-cells, binds to the cytokine receptor WSX-1/TCCR which appears to be required but not sufficient for IL-27-mediated signal transduction. IL-27 potentiate the early phase of TH1 response and suppress TH2 and TH17 differentiation. It induces the differentiation of TH1 cells via two distinct pathways, p38 MAPK/TBX21- and ICAM1/ITGAL/ERK-dependent pathways. It also induces STAT1, STAT3, STAT4 and STAT5 phosphorylation and activates TBX21/T-Bet via STAT1 with resulting IL12RB2 up-regulation, an event crucial to TH1 cell commitment. It suppresses the expression of GATA3, the inhibitor TH1 cells development. In CD8 T-cells, it activates STATs as well as GZMB. IL-27 reveals to be a potent inhibitor of TH17 cell development and of IL-17 production. Indeed IL27 alone is also able to inhibit the production of IL17 by CD4 and CD8 T-cells. While IL-27 suppressed the development of pro-inflammatory Th17 cells via STAT1, it inhibits the development of anti-inflammatory inducible regulatory T-cells, iTreg, independently of STAT1. IL-27 also has an effect on cytokine production, it suppresses pro-inflammatory cytokine production such as IL2, IL4, IL5 and IL6 and activates suppressors of cytokine signaling such as SOCS1 and SOCS3. Apart from suppression of cytokine production, IL-27 also antagonizes the effects of some cytokines such as IL6 through direct effects on T-cells. Another important role of IL-27 is its antitumor activity as well as its antiangiogenic activity with activation of production of antiangiogenic chemokines such as IP-10/CXCL10 and MIG/CXCL9. In vein endothelial cells, it induces IRF1/interferon regulatory factor 1 and increase the expression of MHC class II transactivator/CIITA with resulting up-regulation of major histocompatibility complex class II. This chain is Interleukin-27 subunit alpha (IL27), found in Sus scrofa (Pig).